The primary structure comprises 98 residues: NADH-ubiquinone oxidoreductase chain 4L (98 aa).

3 helical membrane-spanning segments follow: residues 1–21 (MSLT…GLLM), 29–49 (SLLC…MTIL), and 61–81 (IILL…LVMV).

It belongs to the complex I subunit 4L family. Core subunit of respiratory chain NADH dehydrogenase (Complex I) which is composed of 45 different subunits.

The protein resides in the mitochondrion inner membrane. It catalyses the reaction a ubiquinone + NADH + 5 H(+)(in) = a ubiquinol + NAD(+) + 4 H(+)(out). Its function is as follows. Core subunit of the mitochondrial membrane respiratory chain NADH dehydrogenase (Complex I) which catalyzes electron transfer from NADH through the respiratory chain, using ubiquinone as an electron acceptor. Part of the enzyme membrane arm which is embedded in the lipid bilayer and involved in proton translocation. The chain is NADH-ubiquinone oxidoreductase chain 4L (MT-ND4L) from Vampyressa brocki (Brock's yellow-eared bat).